We begin with the raw amino-acid sequence, 559 residues long: Transcription activator of gluconeogenesis ERT1-2 (559 aa).

A DNA-binding region (zn(2)-C6 fungal-type) is located at residues 23 to 51 (CIHCQRTHLTCDNNRPCERCVARGFADTC). Disordered stretches follow at residues 63–159 (DDKE…TPSQ), 231–263 (SNSL…TPSA), and 329–349 (AGQP…DSPS). Low complexity-rich tracts occupy residues 139-159 (QGPQ…TPSQ) and 231-244 (SNSL…QSPN). Positions 245 to 260 (THSPHNQDQPTPQAAT) are enriched in polar residues. Positions 440–512 (ALLEYQKFIS…ELFSRIAFGD (73 aa)) constitute a PAS domain.

This sequence belongs to the ERT1/acuK family.

The protein localises to the nucleus. Functionally, transcription factor which regulates nonfermentable carbon utilization. Activator of gluconeogenetic genes. The protein is Transcription activator of gluconeogenesis ERT1-2 (ERT1-2) of Yarrowia lipolytica (strain CLIB 122 / E 150) (Yeast).